Consider the following 537-residue polypeptide: Spore coat protein SP70 (537 aa).

Residues 1–20 (MRILKLAALSCLLFIAPSLS) form the signal peptide. A DSCP-N domain is found at 21–140 (INCDGLSKDQ…CQIPATGGGP (120 aa)). N-linked (GlcNAc...) asparagine glycosylation is present at Asn-97. Positions 157-179 (SCDKVNCPNGYICTIVNQLAVCV) constitute a Follistatin-like 1 domain. The disordered stretch occupies residues 183–246 (SSSSSSSSTT…GSHTTTGGST (64 aa)). Follistatin-like domains follow at residues 250-272 (TCGN…AVCV), 278-296 (SCAN…GECI), 358-380 (TCKT…PTCV), and 389-415 (TCKD…EECC).

Phosphorylated and fucosylated.

The sequence is that of Spore coat protein SP70 (cotB) from Dictyostelium discoideum (Social amoeba).